A 190-amino-acid polypeptide reads, in one-letter code: Elongation factor P-like protein (190 aa).

The protein belongs to the elongation factor P family.

The polypeptide is Elongation factor P-like protein (Yersinia pestis bv. Antiqua (strain Antiqua)).